Here is a 299-residue protein sequence, read N- to C-terminus: Proline iminopeptidase (299 aa).

The region spanning 26 to 272 is the AB hydrolase-1 domain; the sequence is VLLLAGGPGF…QFLYCANGSH (247 aa). The active-site Nucleophile is S103. The active site involves D245. The Proton donor role is filled by H272.

This sequence belongs to the peptidase S33 family. As to quaternary structure, monomer.

The catalysed reaction is Release of N-terminal proline from a peptide.. In terms of biological role, releases the N-terminal proline from various substrates. This Chitinophaga pinensis (strain ATCC 43595 / DSM 2588 / LMG 13176 / NBRC 15968 / NCIMB 11800 / UQM 2034) protein is Proline iminopeptidase.